The primary structure comprises 392 residues: GTPase Obg (392 aa).

The Obg domain maps to 1-159 (MKFVDEATIL…RDLQLELMLL (159 aa)). Residues 127–148 (NSRFKSSVNRSPRQKTMGTPGD) form a disordered region. Over residues 129 to 143 (RFKSSVNRSPRQKTM) the composition is skewed to polar residues. The OBG-type G domain occupies 160–333 (ADVGMLGMPN…LCWDVMAFII (174 aa)). Residues 166–173 (GMPNAGKS), 191–195 (FTTLV), 213–216 (DIPG), 283–286 (NKID), and 314–316 (SAA) contribute to the GTP site. Residues Ser-173 and Thr-193 each contribute to the Mg(2+) site. Positions 363 to 386 (EQEVEVEDDEEWDEDWDEDDEEGV) are enriched in acidic residues. The interval 363–392 (EQEVEVEDDEEWDEDWDEDDEEGVEFIYKR) is disordered.

Belongs to the TRAFAC class OBG-HflX-like GTPase superfamily. OBG GTPase family. Monomer. It depends on Mg(2+) as a cofactor.

It is found in the cytoplasm. In terms of biological role, an essential GTPase which binds GTP, GDP and possibly (p)ppGpp with moderate affinity, with high nucleotide exchange rates and a fairly low GTP hydrolysis rate. Plays a role in control of the cell cycle, stress response, ribosome biogenesis and in those bacteria that undergo differentiation, in morphogenesis control. This Enterobacter sp. (strain 638) protein is GTPase Obg.